The following is a 395-amino-acid chain: Glutamyl-tRNA reductase (395 aa).

Substrate is bound by residues 45–48 (TCNR), S87, 92–94 (EDQ), and Q98. The Nucleophile role is filled by C46. Residue 167–172 (GAGEMG) participates in NADP(+) binding.

Belongs to the glutamyl-tRNA reductase family. In terms of assembly, homodimer.

The enzyme catalyses (S)-4-amino-5-oxopentanoate + tRNA(Glu) + NADP(+) = L-glutamyl-tRNA(Glu) + NADPH + H(+). The protein operates within porphyrin-containing compound metabolism; protoporphyrin-IX biosynthesis; 5-aminolevulinate from L-glutamyl-tRNA(Glu): step 1/2. Functionally, catalyzes the NADPH-dependent reduction of glutamyl-tRNA(Glu) to glutamate 1-semialdehyde (GSA). The protein is Glutamyl-tRNA reductase of Methanosphaera stadtmanae (strain ATCC 43021 / DSM 3091 / JCM 11832 / MCB-3).